Reading from the N-terminus, the 275-residue chain is Large ribosomal subunit protein uL2 (275 aa).

The tract at residues Ala-224–Gly-275 is disordered.

It belongs to the universal ribosomal protein uL2 family. Part of the 50S ribosomal subunit. Forms a bridge to the 30S subunit in the 70S ribosome.

Its function is as follows. One of the primary rRNA binding proteins. Required for association of the 30S and 50S subunits to form the 70S ribosome, for tRNA binding and peptide bond formation. It has been suggested to have peptidyltransferase activity; this is somewhat controversial. Makes several contacts with the 16S rRNA in the 70S ribosome. This Xanthomonas oryzae pv. oryzae (strain MAFF 311018) protein is Large ribosomal subunit protein uL2.